The sequence spans 153 residues: Large ribosomal subunit protein uL22 (153 aa).

This sequence belongs to the universal ribosomal protein uL22 family. As to quaternary structure, part of the 50S ribosomal subunit.

Functionally, this protein binds specifically to 23S rRNA. It makes multiple contacts with different domains of the 23S rRNA in the assembled 50S subunit and ribosome. Its function is as follows. The globular domain of the protein is located near the polypeptide exit tunnel on the outside of the subunit, while an extended beta-hairpin is found that lines the wall of the exit tunnel in the center of the 70S ribosome. This chain is Large ribosomal subunit protein uL22, found in Methanococcus aeolicus (strain ATCC BAA-1280 / DSM 17508 / OCM 812 / Nankai-3).